The following is a 187-amino-acid chain: Shikimate kinase (187 aa).

18–23 (GCGKST) is a binding site for ATP. Ser-22 serves as a coordination point for Mg(2+). Residues Asp-40, Arg-64, and Gly-86 each coordinate substrate. Arg-128 contributes to the ATP binding site. Residue Arg-147 participates in substrate binding. Arg-164 contacts ATP.

The protein belongs to the shikimate kinase family. In terms of assembly, monomer. It depends on Mg(2+) as a cofactor.

It is found in the cytoplasm. It catalyses the reaction shikimate + ATP = 3-phosphoshikimate + ADP + H(+). It functions in the pathway metabolic intermediate biosynthesis; chorismate biosynthesis; chorismate from D-erythrose 4-phosphate and phosphoenolpyruvate: step 5/7. Its function is as follows. Catalyzes the specific phosphorylation of the 3-hydroxyl group of shikimic acid using ATP as a cosubstrate. The chain is Shikimate kinase from Rhodopirellula baltica (strain DSM 10527 / NCIMB 13988 / SH1).